A 176-amino-acid chain; its full sequence is Cytochrome c oxidase subunit 4 isoform 2, mitochondrial (176 aa).

The N-terminal 28 residues, 1–28, are a transit peptide targeting the mitochondrion; sequence MLRLTAGRVRSLLAGRATAAFSTSSARM. At 29-106 the chain is on the mitochondrial matrix side; the sequence is ASHDLEVAES…TYSEMKQPSS (78 aa). A helical transmembrane segment spans residues 107–132; that stretch reads EWKTVFGGIFIFLGFTGLVVWWQALY. Residues 133 to 176 lie on the Mitochondrial intermembrane side of the membrane; sequence VYPPRPRTFDDEWKAKQLKRMLDMRVNPIEGFSAKWDYEKGQWK.

The protein belongs to the cytochrome c oxidase IV family. Component of the cytochrome c oxidase (complex IV, CIV), a multisubunit enzyme composed of 14 subunits. The complex is composed of a catalytic core of 3 subunits MT-CO1, MT-CO2 and MT-CO3, encoded in the mitochondrial DNA, and 11 supernumerary subunits COX4I, COX5A, COX5B, COX6A, COX6B, COX6C, COX7A, COX7B, COX7C, COX8 and NDUFA4, which are encoded in the nuclear genome. The complex exists as a monomer or a dimer and forms supercomplexes (SCs) in the inner mitochondrial membrane with NADH-ubiquinone oxidoreductase (complex I, CI) and ubiquinol-cytochrome c oxidoreductase (cytochrome b-c1 complex, complex III, CIII), resulting in different assemblies (supercomplex SCI(1)III(2)IV(1) and megacomplex MCI(2)III(2)IV(2)).

The protein localises to the mitochondrion inner membrane. The protein operates within energy metabolism; oxidative phosphorylation. Functionally, component of the cytochrome c oxidase, the last enzyme in the mitochondrial electron transport chain which drives oxidative phosphorylation. The respiratory chain contains 3 multisubunit complexes succinate dehydrogenase (complex II, CII), ubiquinol-cytochrome c oxidoreductase (cytochrome b-c1 complex, complex III, CIII) and cytochrome c oxidase (complex IV, CIV), that cooperate to transfer electrons derived from NADH and succinate to molecular oxygen, creating an electrochemical gradient over the inner membrane that drives transmembrane transport and the ATP synthase. Cytochrome c oxidase is the component of the respiratory chain that catalyzes the reduction of oxygen to water. Electrons originating from reduced cytochrome c in the intermembrane space (IMS) are transferred via the dinuclear copper A center (CU(A)) of subunit 2 and heme A of subunit 1 to the active site in subunit 1, a binuclear center (BNC) formed by heme A3 and copper B (CU(B)). The BNC reduces molecular oxygen to 2 water molecules using 4 electrons from cytochrome c in the IMS and 4 protons from the mitochondrial matrix. The sequence is that of Cytochrome c oxidase subunit 4 isoform 2, mitochondrial from Thunnus obesus (Bigeye tuna).